The following is a 285-amino-acid chain: CCR4-NOT transcription complex subunit 7 (285 aa).

Residues aspartate 40, glutamate 42, aspartate 161, aspartate 230, and glutamate 278 each contribute to the a divalent metal cation site.

It belongs to the CAF1 family. In terms of assembly, component of the CCR4-NOT complex; distinct complexes seem to exist that differ in the participation of probably mutually exclusive catalytic subunits; the complex contains two deadenylase subunits, CNOT6 or CNOT6L, and CNOT7 or CNOT8. In the complex, interacts directly with CNOT1. Interacts with AGO2. Interacts with TOB1; recruited by TOB1 to a ternary complex with CPEB3 which is required for mRNA deadenylation and decay. Interacts with BTG1. Interacts with BTG2. Interacts with NANOS2. Interacts with ZFP36, ZFP36L1 and ZFP36L2; these interactions are inhibited in response to phorbol 12-myristate 13-acetate (PMA) treatment in a p38 MAPK-dependent manner. Interacts with BTG4. Interacts with EIF4E; this interaction is increased by CNOT7 interaction with BTG4. The cofactor is Mn(2+). Mg(2+) serves as cofactor. It depends on Co(2+) as a cofactor.

It localises to the nucleus. It is found in the cytoplasm. The protein resides in the P-body. The protein localises to the cytoplasmic ribonucleoprotein granule. It catalyses the reaction Exonucleolytic cleavage of poly(A) to 5'-AMP.. Functionally, has 3'-5' poly(A) exoribonuclease activity for synthetic poly(A) RNA substrate. Its function seems to be partially redundant with that of CNOT8. Catalytic component of the CCR4-NOT complex which is one of the major cellular mRNA deadenylases and is linked to various cellular processes including bulk mRNA degradation, miRNA-mediated repression, translational repression during translational initiation and general transcription regulation. During miRNA-mediated repression the complex also seems to act as translational repressor during translational initiation. Additional complex functions may be a consequence of its influence on mRNA expression. Required for miRNA-mediated mRNA deadenylation. Associates with members of the BTG family such as TOB1 and BTG2 and is required for their anti-proliferative activity. This chain is CCR4-NOT transcription complex subunit 7 (CNOT7), found in Bos taurus (Bovine).